Here is a 685-residue protein sequence, read N- to C-terminus: DEAD-box ATP-dependent RNA helicase 7 (685 aa).

The tract at residues 1-89 is disordered; it reads MPSISMMSDA…SELVQADDLK (89 aa). 2 stretches are compositionally biased toward basic and acidic residues: residues 22–42 and 66–78; these read MKSE…SSSK and AVDL…KSDN. The Q motif motif lies at 107 to 135; it reads NSLSNFRISKPLKDVLISKGIKALFPIQA. The 183-residue stretch at 138–320 folds into the Helicase ATP-binding domain; it reads FDNVIDGCDL…TRFLKSAKKT (183 aa). Residue 151–158 coordinates ATP; that stretch reads ARTGQGKT. Residues 266–269 carry the DEAD box motif; the sequence is DEAD. A Helicase C-terminal domain is found at 349–491; the sequence is DLIPDIIRCY…LSAPQPVDVA (143 aa).

The protein belongs to the DEAD box helicase family. DDX21/DDX50 subfamily.

The protein resides in the nucleus. The catalysed reaction is ATP + H2O = ADP + phosphate + H(+). The protein is DEAD-box ATP-dependent RNA helicase 7 (RH7) of Spinacia oleracea (Spinach).